A 367-amino-acid polypeptide reads, in one-letter code: Aspartate-semialdehyde dehydrogenase (367 aa).

Residues 10–13, 37–38, and glutamine 73 each bind NADP(+); these read RGMV and TS. Arginine 102 contributes to the phosphate binding site. The active-site Acyl-thioester intermediate is cysteine 135. The residue at position 135 (cysteine 135) is an S-cysteinyl cysteine; in inhibited form. Glutamine 162 serves as a coordination point for substrate. Residues 165 to 166 and proline 193 each bind NADP(+); that span reads SG. Glutamate 241 is a substrate binding site. Lysine 244 provides a ligand contact to phosphate. Arginine 267 contacts substrate. Histidine 274 acts as the Proton acceptor in catalysis. Residue glutamine 350 participates in NADP(+) binding.

It belongs to the aspartate-semialdehyde dehydrogenase family. Homodimer.

It catalyses the reaction L-aspartate 4-semialdehyde + phosphate + NADP(+) = 4-phospho-L-aspartate + NADPH + H(+). It participates in amino-acid biosynthesis; L-lysine biosynthesis via DAP pathway; (S)-tetrahydrodipicolinate from L-aspartate: step 2/4. It functions in the pathway amino-acid biosynthesis; L-methionine biosynthesis via de novo pathway; L-homoserine from L-aspartate: step 2/3. Its pathway is amino-acid biosynthesis; L-threonine biosynthesis; L-threonine from L-aspartate: step 2/5. Functionally, catalyzes the NADPH-dependent formation of L-aspartate-semialdehyde (L-ASA) by the reductive dephosphorylation of L-aspartyl-4-phosphate. The polypeptide is Aspartate-semialdehyde dehydrogenase (Escherichia coli O6:H1 (strain CFT073 / ATCC 700928 / UPEC)).